Consider the following 466-residue polypeptide: Ornithine decarboxylase (466 aa).

Lys116 is subject to N6-(pyridoxal phosphate)lysine. Residues Ser247, Gly286, and 318 to 321 (EPGR) contribute to the pyridoxal 5'-phosphate site. 362-363 (FD) serves as a coordination point for substrate. Catalysis depends on Cys411, which acts as the Proton donor; shared with dimeric partner. Substrate is bound at residue Asp412. Tyr441 contacts pyridoxal 5'-phosphate.

It belongs to the Orn/Lys/Arg decarboxylase class-II family. As to quaternary structure, homodimer. Only the dimer is catalytically active, as the active sites are constructed of residues from both monomers. Pyridoxal 5'-phosphate is required as a cofactor.

The protein localises to the cytoplasm. The enzyme catalyses L-ornithine + H(+) = putrescine + CO2. It functions in the pathway amine and polyamine biosynthesis; putrescine biosynthesis via L-ornithine pathway; putrescine from L-ornithine: step 1/1. Its activity is regulated as follows. Inhibited by antizyme (AZ) OAZ1 in response to polyamine levels. AZ inhibits the assembly of the functional homodimer by binding to ODC monomers and targeting them for ubiquitin-independent proteolytic destruction by the 26S proteasome. Its function is as follows. Catalyzes the first and rate-limiting step of polyamine biosynthesis that converts ornithine into putrescine, which is the precursor for the polyamines, spermidine and spermine. Polyamines are essential for cell proliferation and are implicated in cellular processes, ranging from DNA replication to apoptosis. The polypeptide is Ornithine decarboxylase (Saccharomyces cerevisiae (strain ATCC 204508 / S288c) (Baker's yeast)).